We begin with the raw amino-acid sequence, 275 residues long: Fructose permease IID component (275 aa).

The region spanning 5–274 (KRLTKKEIFS…GILGYWAGFL (270 aa)) is the PTS EIID domain. 5 consecutive transmembrane segments (helical) span residues 100–120 (MKIG…WGTI), 127–147 (LGAS…FFLL), 187–207 (ILGL…NIPI), 227–247 (VLDS…VAWM), and 255–275 (LLII…GFLA).

The protein localises to the cell membrane. In terms of biological role, the phosphoenolpyruvate-dependent sugar phosphotransferase system (PTS), a major carbohydrate active -transport system, catalyzes the phosphorylation of incoming sugar substrates concomitant with their translocation across the cell membrane. This system is involved in fructose transport. The protein is Fructose permease IID component (levG) of Bacillus subtilis (strain 168).